Consider the following 304-residue polypeptide: Undecaprenyl-diphosphatase (304 aa).

The next 8 membrane-spanning stretches (helical) occupy residues 5–25 (FLFI…EFVP), 47–67 (GFPE…VVVL), 72–92 (ISSS…LKAS), 111–131 (FGIN…LFHD), 137–157 (LFST…LIVI), 209–231 (ISGL…AMVG), 248–268 (TNLI…LVVI), and 282–302 (IFAI…FTKV).

Belongs to the UppP family.

Its subcellular location is the cell membrane. The enzyme catalyses di-trans,octa-cis-undecaprenyl diphosphate + H2O = di-trans,octa-cis-undecaprenyl phosphate + phosphate + H(+). In terms of biological role, catalyzes the dephosphorylation of undecaprenyl diphosphate (UPP). Confers resistance to bacitracin. The polypeptide is Undecaprenyl-diphosphatase (Clostridium perfringens (strain SM101 / Type A)).